The sequence spans 206 residues: Large ribosomal subunit protein uL13w (206 aa).

It belongs to the universal ribosomal protein uL13 family.

The chain is Large ribosomal subunit protein uL13w (RPL13AD) from Arabidopsis thaliana (Mouse-ear cress).